A 31-amino-acid polypeptide reads, in one-letter code: Cyclotide glopa C (31 aa).

The segment at residues 1 to 31 (GDLPICGETCFEGGNCRIPGCTCVWPFCSKN) is a cross-link (cyclopeptide (Gly-Asn)). 3 disulfide bridges follow: Cys-6/Cys-21, Cys-10/Cys-23, and Cys-16/Cys-28.

In terms of processing, this is a cyclic peptide.

Probably participates in a plant defense mechanism. The polypeptide is Cyclotide glopa C (Gloeospermum pauciflorum).